The chain runs to 322 residues: Ig gamma-2A chain C region (322 aa).

Ig-like domains lie at 6–98 (PSVY…KKIV), 115–212 (VFIF…KSIS), and 221–317 (PQVY…KSLS). 3 disulfides stabilise this stretch: C27–C82, C136–C196, and C242–C300. N-linked (GlcNAc...) asparagine glycosylation occurs at N172.

This is Ig gamma-2A chain C region (Igg-2a) from Rattus norvegicus (Rat).